The sequence spans 701 residues: Elongation factor G (701 aa).

The 281-residue stretch at 10 to 290 (AKVRNIGIMA…AVVDYLPSPL (281 aa)) folds into the tr-type G domain. GTP is bound by residues 19–26 (AHIDAGKT), 83–87 (DTPGH), and 137–140 (NKMD).

This sequence belongs to the TRAFAC class translation factor GTPase superfamily. Classic translation factor GTPase family. EF-G/EF-2 subfamily.

The protein resides in the cytoplasm. Functionally, catalyzes the GTP-dependent ribosomal translocation step during translation elongation. During this step, the ribosome changes from the pre-translocational (PRE) to the post-translocational (POST) state as the newly formed A-site-bound peptidyl-tRNA and P-site-bound deacylated tRNA move to the P and E sites, respectively. Catalyzes the coordinated movement of the two tRNA molecules, the mRNA and conformational changes in the ribosome. This is Elongation factor G from Tropheryma whipplei (strain Twist) (Whipple's bacillus).